A 611-amino-acid polypeptide reads, in one-letter code: Dihydroxy-acid dehydratase (611 aa).

Residue D81 coordinates Mg(2+). C122 lines the [2Fe-2S] cluster pocket. Positions 123 and 124 each coordinate Mg(2+). Position 124 is an N6-carboxylysine (K124). Residue C195 participates in [2Fe-2S] cluster binding. A Mg(2+)-binding site is contributed by E491. The Proton acceptor role is filled by S517.

This sequence belongs to the IlvD/Edd family. In terms of assembly, homodimer. Requires [2Fe-2S] cluster as cofactor. It depends on Mg(2+) as a cofactor.

The enzyme catalyses (2R)-2,3-dihydroxy-3-methylbutanoate = 3-methyl-2-oxobutanoate + H2O. It carries out the reaction (2R,3R)-2,3-dihydroxy-3-methylpentanoate = (S)-3-methyl-2-oxopentanoate + H2O. The protein operates within amino-acid biosynthesis; L-isoleucine biosynthesis; L-isoleucine from 2-oxobutanoate: step 3/4. It functions in the pathway amino-acid biosynthesis; L-valine biosynthesis; L-valine from pyruvate: step 3/4. Its function is as follows. Functions in the biosynthesis of branched-chain amino acids. Catalyzes the dehydration of (2R,3R)-2,3-dihydroxy-3-methylpentanoate (2,3-dihydroxy-3-methylvalerate) into 2-oxo-3-methylpentanoate (2-oxo-3-methylvalerate) and of (2R)-2,3-dihydroxy-3-methylbutanoate (2,3-dihydroxyisovalerate) into 2-oxo-3-methylbutanoate (2-oxoisovalerate), the penultimate precursor to L-isoleucine and L-valine, respectively. The chain is Dihydroxy-acid dehydratase from Histophilus somni (strain 129Pt) (Haemophilus somnus).